The primary structure comprises 184 residues: ATP synthase subunit b, chloroplastic (184 aa).

A helical transmembrane segment spans residues 27–49 (LATNPINLSVVLGVLIFFGKGVL).

It belongs to the ATPase B chain family. In terms of assembly, F-type ATPases have 2 components, F(1) - the catalytic core - and F(0) - the membrane proton channel. F(1) has five subunits: alpha(3), beta(3), gamma(1), delta(1), epsilon(1). F(0) has four main subunits: a(1), b(1), b'(1) and c(10-14). The alpha and beta chains form an alternating ring which encloses part of the gamma chain. F(1) is attached to F(0) by a central stalk formed by the gamma and epsilon chains, while a peripheral stalk is formed by the delta, b and b' chains.

It is found in the plastid. It localises to the chloroplast thylakoid membrane. In terms of biological role, f(1)F(0) ATP synthase produces ATP from ADP in the presence of a proton or sodium gradient. F-type ATPases consist of two structural domains, F(1) containing the extramembraneous catalytic core and F(0) containing the membrane proton channel, linked together by a central stalk and a peripheral stalk. During catalysis, ATP synthesis in the catalytic domain of F(1) is coupled via a rotary mechanism of the central stalk subunits to proton translocation. Its function is as follows. Component of the F(0) channel, it forms part of the peripheral stalk, linking F(1) to F(0). The chain is ATP synthase subunit b, chloroplastic from Carica papaya (Papaya).